The chain runs to 110 residues: uncharacterized protein (110 aa).

This is an uncharacterized protein from Mycobacterium tuberculosis (strain CDC 1551 / Oshkosh).